A 179-amino-acid chain; its full sequence is MAFLASGPYLTHQQKVLRLYKRALRHLESWCVQRDKYRYFACLMRARFEEHKNEKDMAKATQLLKEAEEEFWYRQHPQPYIFPDSPGGTSYERYDCYKVPEWCLDDWHPSEKAMYPDYFAKREQWKKLRRESWEREVKQLQEETPPGGPLTEALPPARKEGDLPPLWWYIVTRPRERPM.

A2 is subject to N-acetylalanine. S85 bears the Phosphoserine mark. The interval E136–D162 is disordered.

This sequence belongs to the complex I LYR family. Mammalian complex I is composed of 45 different subunits.

The protein localises to the mitochondrion inner membrane. Its function is as follows. Accessory subunit of the mitochondrial membrane respiratory chain NADH dehydrogenase (Complex I), that is believed to be not involved in catalysis. Complex I functions in the transfer of electrons from NADH to the respiratory chain. The immediate electron acceptor for the enzyme is believed to be ubiquinone. This is NADH dehydrogenase [ubiquinone] 1 beta subcomplex subunit 9 (NDUFB9) from Homo sapiens (Human).